Here is a 589-residue protein sequence, read N- to C-terminus: ATP-dependent lipid A-core flippase (589 aa).

The next 5 membrane-spanning stretches (helical) occupy residues 29–49 (WLLV…STFL), 68–88 (ALWL…AGYI), 157–177 (VIGA…AILL), 254–274 (ISSA…LLIA), and 283–303 (LSPG…PALK). The 283-residue stretch at 32–314 (VVAACGALLE…LTNVQNMLQS (283 aa)) folds into the ABC transmembrane type-1 domain. The 237-residue stretch at 346 to 582 (IEFRGITARY…DGLYAYLYSM (237 aa)) folds into the ABC transporter domain. Residue 380-387 (GRSGSGKS) participates in ATP binding.

It belongs to the ABC transporter superfamily. Lipid exporter (TC 3.A.1.106) family. Homodimer.

It localises to the cell inner membrane. It carries out the reaction ATP + H2O + lipid A-core oligosaccharideSide 1 = ADP + phosphate + lipid A-core oligosaccharideSide 2.. Its function is as follows. Involved in lipopolysaccharide (LPS) biosynthesis. Translocates lipid A-core from the inner to the outer leaflet of the inner membrane. Transmembrane domains (TMD) form a pore in the inner membrane and the ATP-binding domain (NBD) is responsible for energy generation. In Xylella fastidiosa (strain Temecula1 / ATCC 700964), this protein is ATP-dependent lipid A-core flippase.